The primary structure comprises 443 residues: ATP-dependent protease ATPase subunit HslU (443 aa).

ATP-binding positions include I18, 60-65 (GVGKTE), D256, E321, and R393.

The protein belongs to the ClpX chaperone family. HslU subfamily. As to quaternary structure, a double ring-shaped homohexamer of HslV is capped on each side by a ring-shaped HslU homohexamer. The assembly of the HslU/HslV complex is dependent on binding of ATP.

The protein resides in the cytoplasm. ATPase subunit of a proteasome-like degradation complex; this subunit has chaperone activity. The binding of ATP and its subsequent hydrolysis by HslU are essential for unfolding of protein substrates subsequently hydrolyzed by HslV. HslU recognizes the N-terminal part of its protein substrates and unfolds these before they are guided to HslV for hydrolysis. This Edwardsiella ictaluri (strain 93-146) protein is ATP-dependent protease ATPase subunit HslU.